We begin with the raw amino-acid sequence, 833 residues long: Vacuolar protein sorting-associated protein 16 homolog (833 aa).

Belongs to the VPS16 family. Component of the homotypic fusion and vacuole protein sorting (HOPS) complex, composed of Vps16A, car/Vps33A, dor/Vps18, Vps39, Vps11 and lt/Vps41. Interacts with Syx17 (via SNARE domain); the interaction may involve multiple components of the HOPS complex and may promote assembly of the Syx17-Snap29-Vamp7 trans-SNARE complex. Component of the class C core vacuole/endosome tethering (CORVET) complex composed of at least Vps8, dor/Vps18, car/Vps33A and Vps16A; unlike in other species, Vps11 is not part of the Drosophila complex. Due to the reduced number of components the Drosophila CORVET complex is often referred to as the miniCORVET complex. The tethering complex core made up of Vps16A, car/Vps33A and dor/Vps18 and shared by both HOPS and CORVET, preferentially associates with CORVET-specific Vps8 over HOPS-specific lt/Vps41. Interacts with Rab2 (GTP-bound form).

It localises to the late endosome membrane. Its subcellular location is the lysosome membrane. The protein localises to the cytoplasmic vesicle. It is found in the autophagosome. In terms of biological role, core component of the class C core vacuole/endosome tethering (CORVET) and the homotypic fusion and vacuole protein sorting (HOPS) tethering complexes involved in endo-lysosomal vesicle trafficking and lysosome biogenesis. The CORVET complex facilitates docking and fusion of endosomal vesicles during endosome maturation, acts upstream of HOPS, but is not involved in autophagic flux. The CORVET complex may cooperate with the early endosomal tether Rbsn-5 to mediate endosomal fusion. The HOPS complex facilitates docking and fusion of lysosomes with late endosomes and several other types of vesicles. The HOPS complex is also involved in autophagy and crinophagy (the elimination of unused secretory granules through their fusion with lysosomes). The HOPS complex mediates autophagocitic flux, probably by binding autophagosome-associated Syx17/syntaxin 17, promoting assembly of the trans-SNARE complex and instigating autophagosome-lysosome fusion. Independent of Syx17/syntaxin 17, HOPS is involved in biosynthetic transport to lysosomes and lysosome-related organelles such as eye-pigment granules. Required for endocytic degradation of boss/bride of sevenless and N/Notch in developing ommatidia. In Drosophila melanogaster (Fruit fly), this protein is Vacuolar protein sorting-associated protein 16 homolog.